Here is a 330-residue protein sequence, read N- to C-terminus: Methionyl-tRNA formyltransferase (330 aa).

121-124 contacts (6S)-5,6,7,8-tetrahydrofolate; that stretch reads SLLP.

Belongs to the Fmt family.

The catalysed reaction is L-methionyl-tRNA(fMet) + (6R)-10-formyltetrahydrofolate = N-formyl-L-methionyl-tRNA(fMet) + (6S)-5,6,7,8-tetrahydrofolate + H(+). Its function is as follows. Attaches a formyl group to the free amino group of methionyl-tRNA(fMet). The formyl group appears to play a dual role in the initiator identity of N-formylmethionyl-tRNA by promoting its recognition by IF2 and preventing the misappropriation of this tRNA by the elongation apparatus. The chain is Methionyl-tRNA formyltransferase from Burkholderia orbicola (strain MC0-3).